A 420-amino-acid chain; its full sequence is WD repeat-containing protein jip5 (420 aa).

6 WD repeats span residues 9-48 (PLSA…VDSD), 72-111 (RHKG…VENK), 117-158 (DKNG…SKVS), 221-262 (VSSV…DQDE), 271-314 (GGGE…VVSE), and 318-355 (DETE…GDGV). Positions 39–63 (RLPSDEVDSDDDGASTSSSRTGRGH) are disordered. The interval 350–420 (DSGDGVNGNE…QAVMAFHDLD (71 aa)) is disordered. The segment covering 368-387 (DDSDEDSDDGDDDDDSGDSD) has biased composition (acidic residues). Residues 394–406 (DARKKRKKGKTPK) are compositionally biased toward basic residues.

It belongs to the WD repeat WDR55 family.

It localises to the nucleus. It is found in the nucleolus. The chain is WD repeat-containing protein jip5 (jip5) from Aspergillus terreus (strain NIH 2624 / FGSC A1156).